The following is a 376-amino-acid chain: Lipoprotein p33 (376 aa).

The first 30 residues, 1-30, serve as a signal peptide directing secretion; it reads MKIKKIKLLKALALTGAFGIVATVPVIVYS. A lipid anchor (N-palmitoyl cysteine) is attached at Cys-31. A lipid anchor (S-diacylglycerol cysteine) is attached at Cys-31. Residues 35–59 form a disordered region; it reads DNNGGTGDNNTGGGGSGTDQQQGTT. The segment covering 38–51 has biased composition (gly residues); it reads GGTGDNNTGGGGSG.

This sequence belongs to the p35 lipoprotein family.

The protein resides in the cell membrane. The protein is Lipoprotein p33 of Malacoplasma penetrans (Mycoplasma penetrans).